Here is a 451-residue protein sequence, read N- to C-terminus: Methylenetetrahydrofolate--tRNA-(uracil-5-)-methyltransferase TrmFO (451 aa).

Position 10 to 15 (10 to 15 (GGGLAG)) interacts with FAD.

The protein belongs to the MnmG family. TrmFO subfamily. It depends on FAD as a cofactor.

It is found in the cytoplasm. It carries out the reaction uridine(54) in tRNA + (6R)-5,10-methylene-5,6,7,8-tetrahydrofolate + NADH + H(+) = 5-methyluridine(54) in tRNA + (6S)-5,6,7,8-tetrahydrofolate + NAD(+). The catalysed reaction is uridine(54) in tRNA + (6R)-5,10-methylene-5,6,7,8-tetrahydrofolate + NADPH + H(+) = 5-methyluridine(54) in tRNA + (6S)-5,6,7,8-tetrahydrofolate + NADP(+). Its function is as follows. Catalyzes the folate-dependent formation of 5-methyl-uridine at position 54 (M-5-U54) in all tRNAs. The protein is Methylenetetrahydrofolate--tRNA-(uracil-5-)-methyltransferase TrmFO of Anaeromyxobacter sp. (strain Fw109-5).